Reading from the N-terminus, the 378-residue chain is Chaperone protein DnaJ 2 (378 aa).

A J domain is found at 4-68; the sequence is DYYAVLGVRR…QKKQVYDLGG (65 aa). The CR-type zinc-finger motif lies at 130–212; the sequence is GTTKDIQVDT…CAGDGRVRSR (83 aa). Zn(2+) contacts are provided by Cys143, Cys146, Cys160, Cys163, Cys186, Cys189, Cys200, and Cys203. 4 CXXCXGXG motif repeats span residues 143–150, 160–167, 186–193, and 200–207; these read CNTCNGEG, CDMCRGRG, CPQCQGFG, and CPECAGDG. 2 disordered regions span residues 297–319 and 351–378; these read RPGTQSGQSIPKHGRGVTHLRGG and RGEERPTGQFQPGQQGLFSRLKDAFNGR. Residues 358–367 are compositionally biased toward polar residues; sequence GQFQPGQQGL.

It belongs to the DnaJ family. As to quaternary structure, homodimer. The cofactor is Zn(2+).

The protein resides in the cytoplasm. In terms of biological role, participates actively in the response to hyperosmotic and heat shock by preventing the aggregation of stress-denatured proteins and by disaggregating proteins, also in an autonomous, DnaK-independent fashion. Unfolded proteins bind initially to DnaJ; upon interaction with the DnaJ-bound protein, DnaK hydrolyzes its bound ATP, resulting in the formation of a stable complex. GrpE releases ADP from DnaK; ATP binding to DnaK triggers the release of the substrate protein, thus completing the reaction cycle. Several rounds of ATP-dependent interactions between DnaJ, DnaK and GrpE are required for fully efficient folding. Also involved, together with DnaK and GrpE, in the DNA replication of plasmids through activation of initiation proteins. The polypeptide is Chaperone protein DnaJ 2 (Streptomyces coelicolor (strain ATCC BAA-471 / A3(2) / M145)).